Reading from the N-terminus, the 441-residue chain is Putative serine/threonine-protein kinase F31E3.2 (441 aa).

Positions 1–16 (MGNVATRKRPGCHHHI) are enriched in basic residues. Residues 1-41 (MGNVATRKRPGCHHHIGRNEENLDDDEDGPAKKRLRIGEPQ) form a disordered region. The 256-residue stretch at 126 to 381 (FVLERQLGRG…FTVLHAHPFF (256 aa)) folds into the Protein kinase domain. ATP-binding positions include 132-140 (LGRGSFGVV) and K156. D253 (proton acceptor) is an active-site residue.

Belongs to the protein kinase superfamily. Ser/Thr protein kinase family.

The catalysed reaction is L-seryl-[protein] + ATP = O-phospho-L-seryl-[protein] + ADP + H(+). The enzyme catalyses L-threonyl-[protein] + ATP = O-phospho-L-threonyl-[protein] + ADP + H(+). The polypeptide is Putative serine/threonine-protein kinase F31E3.2 (Caenorhabditis elegans).